The primary structure comprises 424 residues: Histidine--tRNA ligase (424 aa).

Belongs to the class-II aminoacyl-tRNA synthetase family. As to quaternary structure, homodimer.

It localises to the cytoplasm. It catalyses the reaction tRNA(His) + L-histidine + ATP = L-histidyl-tRNA(His) + AMP + diphosphate + H(+). The sequence is that of Histidine--tRNA ligase from Shewanella piezotolerans (strain WP3 / JCM 13877).